The sequence spans 340 residues: Phosphoribosylformylglycinamidine cyclo-ligase (340 aa).

Belongs to the AIR synthase family.

Its subcellular location is the cytoplasm. The enzyme catalyses 2-formamido-N(1)-(5-O-phospho-beta-D-ribosyl)acetamidine + ATP = 5-amino-1-(5-phospho-beta-D-ribosyl)imidazole + ADP + phosphate + H(+). It functions in the pathway purine metabolism; IMP biosynthesis via de novo pathway; 5-amino-1-(5-phospho-D-ribosyl)imidazole from N(2)-formyl-N(1)-(5-phospho-D-ribosyl)glycinamide: step 2/2. This is Phosphoribosylformylglycinamidine cyclo-ligase from Streptococcus pneumoniae (strain P1031).